Reading from the N-terminus, the 288-residue chain is Diaminopimelate epimerase (288 aa).

Substrate contacts are provided by asparagine 14 and asparagine 67. The Proton donor role is filled by cysteine 76. Substrate contacts are provided by residues 77–78, asparagine 166, asparagine 199, and 217–218; these read GN and ER. Cysteine 226 (proton acceptor) is an active-site residue. Substrate is bound at residue 227-228; sequence GT.

This sequence belongs to the diaminopimelate epimerase family. Homodimer.

The protein localises to the cytoplasm. The catalysed reaction is (2S,6S)-2,6-diaminopimelate = meso-2,6-diaminopimelate. The protein operates within amino-acid biosynthesis; L-lysine biosynthesis via DAP pathway; DL-2,6-diaminopimelate from LL-2,6-diaminopimelate: step 1/1. Functionally, catalyzes the stereoinversion of LL-2,6-diaminopimelate (L,L-DAP) to meso-diaminopimelate (meso-DAP), a precursor of L-lysine and an essential component of the bacterial peptidoglycan. The chain is Diaminopimelate epimerase from Bacillus cereus (strain 03BB102).